The chain runs to 757 residues: Transcription factor FBD3 (757 aa).

The tract at residues M1–R24 is disordered. The segment at residues C31 to C58 is a DNA-binding region (zn(2)-C6 fungal-type). 2 disordered regions span residues G106–T161 and V202–P222. The span at N111 to P120 shows a compositional bias: basic and acidic residues. A compositionally biased stretch (polar residues) spans T125–P135.

It localises to the nucleus. Its function is as follows. Transcription factor; part of the Fusarium detoxification of benzoxazolinone cluster involved in the degradation of benzoxazolinones produced by the host plant. Maize, wheat, and rye produce the 2 benzoxazinone phytoanticipins 2,4-dihy-droxy-7-methoxy-1,4-benzoxazin-3-one (DIMBOA) and 2,4-dihydroxy-1,4-benzoxazin-3-one (DIBOA) that, due to their inherent instability once released, spontaneously degrade to the more stable corresponding benzoxazolinones, 6-methoxy-2-benzoxazolinone (MBOA) and 2-benzoxazolinone (BOA), respectively. FDB3 controls the transcription of the FDB gene cluster in response to 6-methoxy-2-benzoxazolinone (MBOA). The polypeptide is Transcription factor FBD3 (Fusarium pseudograminearum (strain CS3096) (Wheat and barley crown-rot fungus)).